The sequence spans 96 residues: Large ribosomal subunit protein eL43 (96 aa).

A C4-type zinc finger spans residues 41-62 (CPVCAFPKLKRVGTSIWVCDKC).

It belongs to the eukaryotic ribosomal protein eL43 family. Zn(2+) is required as a cofactor.

The protein is Large ribosomal subunit protein eL43 of Methanococcus maripaludis (strain C6 / ATCC BAA-1332).